The following is a 1338-amino-acid chain: Protein dispatched homolog 3 (1338 aa).

The Cytoplasmic portion of the chain corresponds to 1–67; that stretch reads MDTEDDPLLQ…VGWIFTNPYC (67 aa). The chain crosses the membrane as a helical span at residues 68 to 88; sequence AGFILFLGCAIPAVLAVVMFL. At 89–406 the chain is on the lumenal side; the sequence is HYPALDIDIS…YEVRRTFNND (318 aa). The segment at 164 to 196 is disordered; the sequence is TRAKRSAPQGRTSSPEPRAHPHPGNETSRVTRG. In terms of domain architecture, SSD spans 401-559; the sequence is RTFNNDMLLA…LFTMPAALGI (159 aa). A helical membrane pass occupies residues 407–427; sequence MLLAFISSSCIAVLVYILTSC. Position 428 (S428) is a topological domain, cytoplasmic. The chain crosses the membrane as a helical span at residues 429–449; that stretch reads VFLSFFGIASIGLSCLVALFL. Residues 450 to 452 are Lumenal-facing; that stretch reads YHV. The helical transmembrane segment at 453-473 threads the bilayer; it reads VFGIQYLGILNGVAAFVIVGI. The Cytoplasmic segment spans residues 474–517; it reads GVDDVFVFINTYRQATHLKDLRLRMIHTIQTAGKATFFTSLTTA. A helical transmembrane segment spans residues 518–538; it reads AAYAANIFSQIPAVHDFGLFM. Position 539 (S539) is a topological domain, lumenal. The chain crosses the membrane as a helical span at residues 540 to 560; sequence LIVSCCWVAVLFTMPAALGIW. The Cytoplasmic portion of the chain corresponds to 561–672; sequence TLYVSPLESS…WVLWSAVKSR (112 aa). The helical transmembrane segment at 673–693 threads the bilayer; that stretch reads WVIVGLFLLVLLLSIFFASRL. Over 694 to 1128 the chain is Lumenal; it reads RPASRAPVLF…IFMEIIGVQS (435 aa). The disordered stretch occupies residues 747–768; the sequence is SLEKKKRGSASPWGSKGSISDT. A helical membrane pass occupies residues 1129–1149; it reads ALYGLILSLVICVAAVAVFTT. A topological domain (cytoplasmic) is located at residue H1150. A helical membrane pass occupies residues 1151 to 1171; the sequence is ILLLLPVLLSILGVVCLVVTI. The Lumenal portion of the chain corresponds to 1172-1237; sequence MYWSGWEMGA…TIEAIRHVGV (66 aa). A helical membrane pass occupies residues 1238-1258; that stretch reads AIVSSAVTTVIATVPLFFCII. Residues 1259–1266 lie on the Cytoplasmic side of the membrane; that stretch reads APFAKFGK. A helical membrane pass occupies residues 1267–1287; it reads IVALNTGVSILYTLTVSTALL. Residues 1288–1302 lie on the Lumenal side of the membrane; the sequence is SIMGPGTFTRSRTSC. Residues 1303-1323 traverse the membrane as a helical segment; that stretch reads LKAVAGVLLAGLLGLCICLAL. Residues 1324-1338 lie on the Cytoplasmic side of the membrane; the sequence is LKGGFKIPLPNGTAL.

Belongs to the patched family. In terms of tissue distribution, expressed in retina, hippocampus and cerebellum. Expressed in the ganglion and bipolar cells of the inner and outer nuclear layers of the retina and in Purkinje cells (at protein level). Expressed strongly in brain and retina, weakly in testis and bone marrow.

It is found in the endoplasmic reticulum membrane. It localises to the nucleus membrane. Its subcellular location is the cytoplasmic vesicle membrane. Its function is as follows. Plays a role in neuronal proliferation and differentiation. Plays a role in the accumulation of cellular cholesterol. Involved in intracellular lipid droplet formation. May contribute to cholesterol homeostasis in neuronal cells. The sequence is that of Protein dispatched homolog 3 from Gallus gallus (Chicken).